An 87-amino-acid chain; its full sequence is MVNMKASMFLTFAGLVLLFVVCYASESEKKEFPKEMLSSIFAVDNDFKQEERDCAGYMRECKEKLCCSGYVCSSRWKWCVLPAPWRR.

A signal peptide spans 1–24 (MVNMKASMFLTFAGLVLLFVVCYA). Residues 25–52 (SESEKKEFPKEMLSSIFAVDNDFKQEER) constitute a propeptide that is removed on maturation. Cystine bridges form between Cys-54/Cys-67, Cys-61/Cys-72, and Cys-66/Cys-79.

Belongs to the neurotoxin 10 (Hwtx-1) family. 51 (Hntx-8) subfamily. Hntx-8 sub-subfamily. As to expression, expressed by the venom gland.

The protein resides in the secreted. Functionally, ion channel inhibitor. The sequence is that of U3-theraphotoxin-Hhn1a 6 from Cyriopagopus hainanus (Chinese bird spider).